We begin with the raw amino-acid sequence, 308 residues long: Limonin dehydrogenase (308 aa).

It belongs to the aldehyde dehydrogenase family.

The protein localises to the periplasm. With respect to regulation, completely inhibited by HgCl(2), CoCl(2) and CaCl(2). Catalyzes the NAD(+)-dependent conversion of limonin. The sequence is that of Limonin dehydrogenase from Pseudomonas putida (Arthrobacter siderocapsulatus).